Reading from the N-terminus, the 141-residue chain is Hemoglobin subunit alpha (141 aa).

The 141-residue stretch at 1–141 (VLSPADKTNV…VSTVLTSKYR (141 aa)) folds into the Globin domain. A Phosphoserine modification is found at serine 3. Position 7 is an N6-succinyllysine (lysine 7). Position 8 is a phosphothreonine (threonine 8). An N6-succinyllysine modification is found at lysine 11. Lysine 16 is subject to N6-acetyllysine; alternate. Lysine 16 carries the N6-succinyllysine; alternate modification. Tyrosine 24 carries the phosphotyrosine modification. A Phosphoserine modification is found at serine 35. Lysine 40 is modified (N6-succinyllysine). Phosphoserine is present on serine 49. Histidine 58 lines the O2 pocket. Histidine 87 contributes to the heme b binding site. Residue serine 102 is modified to Phosphoserine. Threonine 108 carries the post-translational modification Phosphothreonine. Phosphoserine occurs at positions 124 and 131. Phosphothreonine occurs at positions 134 and 137. Serine 138 carries the phosphoserine modification.

It belongs to the globin family. Heterotetramer of two alpha chains and two beta chains. In terms of tissue distribution, red blood cells.

In terms of biological role, involved in oxygen transport from the lung to the various peripheral tissues. Its function is as follows. Hemopressin acts as an antagonist peptide of the cannabinoid receptor CNR1. Hemopressin-binding efficiently blocks cannabinoid receptor CNR1 and subsequent signaling. The chain is Hemoglobin subunit alpha (HBA) from Loris tardigradus (Slender loris).